Consider the following 33-residue polypeptide: Phosphoglycerate kinase (33 aa).

K13 provides a ligand contact to AMP. An ATP-binding site is contributed by K13.

This sequence belongs to the phosphoglycerate kinase family. As to quaternary structure, monomer. The cofactor is Mg(2+).

It catalyses the reaction (2R)-3-phosphoglycerate + ATP = (2R)-3-phospho-glyceroyl phosphate + ADP. This Pseudotsuga menziesii (Douglas-fir) protein is Phosphoglycerate kinase.